The following is a 101-amino-acid chain: Ascorbate-specific PTS system EIIB component (101 aa).

The PTS EIIB type-2 domain occupies 3–96 (VRILAVCGNG…KLLEVIKEHF (94 aa)). The active-site Phosphocysteine intermediate is Cys-9. Cys-9 is modified (phosphocysteine).

The protein resides in the cytoplasm. It catalyses the reaction N(pros)-phospho-L-histidyl-[protein] + L-ascorbate(out) = L-ascorbate 6-phosphate(in) + L-histidyl-[protein]. In terms of biological role, the phosphoenolpyruvate-dependent sugar phosphotransferase system (sugar PTS), a major carbohydrate active transport system, catalyzes the phosphorylation of incoming sugar substrates concomitantly with their translocation across the cell membrane. The enzyme II UlaABC PTS system is involved in ascorbate transport. The sequence is that of Ascorbate-specific PTS system EIIB component (ulaB) from Salmonella choleraesuis (strain SC-B67).